We begin with the raw amino-acid sequence, 761 residues long: Xaa-Pro dipeptidyl-peptidase (761 aa).

Residues S349, D469, and H499 each act as charge relay system in the active site.

The protein belongs to the peptidase S15 family. As to quaternary structure, homodimer.

The protein localises to the cytoplasm. The enzyme catalyses Hydrolyzes Xaa-Pro-|- bonds to release unblocked, N-terminal dipeptides from substrates including Ala-Pro-|-p-nitroanilide and (sequentially) Tyr-Pro-|-Phe-Pro-|-Gly-Pro-|-Ile.. Its function is as follows. Removes N-terminal dipeptides sequentially from polypeptides having unsubstituted N-termini provided that the penultimate residue is proline. The chain is Xaa-Pro dipeptidyl-peptidase from Streptococcus equi subsp. zooepidemicus (strain H70).